A 593-amino-acid polypeptide reads, in one-letter code: V-type sodium ATPase catalytic subunit A (593 aa).

ATP is bound at residue 232 to 239 (GPFGAGKT).

It belongs to the ATPase alpha/beta chains family.

The enzyme catalyses 4 Na(+)(in) + ATP + H2O = 4 Na(+)(out) + ADP + phosphate + H(+). Its function is as follows. Involved in ATP-driven sodium extrusion. This chain is V-type sodium ATPase catalytic subunit A (ntpA), found in Enterococcus hirae (strain ATCC 9790 / DSM 20160 / JCM 8729 / LMG 6399 / NBRC 3181 / NCIMB 6459 / NCDO 1258 / NCTC 12367 / WDCM 00089 / R).